Here is a 353-residue protein sequence, read N- to C-terminus: Lactosylceramide 4-alpha-galactosyltransferase (353 aa).

At 1-22 (MSKPPDLLLRLLRGAPRQRVCT) the chain is on the cytoplasmic side. Residues 23–43 (LFIIGFKFTFFVSIMIYWHVV) form a helical; Signal-anchor for type II membrane protein membrane-spanning segment. Residues 44–353 (GEPKEKGQLY…TTHEAMKMYL (310 aa)) lie on the Lumenal side of the membrane. Asn121 carries an N-linked (GlcNAc...) asparagine glycan. The short motif at 192-194 (DTD) is the DXD motif element. An N-linked (GlcNAc...) asparagine glycan is attached at Asn203.

It belongs to the glycosyltransferase 32 family. Ubiquitous. Highly expressed in kidney, heart, spleen, liver, testis and placenta.

The protein resides in the golgi apparatus membrane. It carries out the reaction a beta-D-Gal-(1-&gt;4)-beta-D-Glc-(1&lt;-&gt;1)-Cer(d18:1(4E)) + UDP-alpha-D-galactose = a globoside Gb3Cer (d18:1(4E)) + UDP + H(+). The catalysed reaction is a beta-D-Gal-(1&lt;-&gt;1')-ceramide + UDP-alpha-D-galactose = alpha-D-Gal-(1-&gt;4)-beta-D-Gal-(1&lt;-&gt;1')-Cer + UDP + H(+). It participates in glycolipid biosynthesis. Catalyzes the transfer of galactose from UDP-alpha-D-galactose to lactosylceramide/beta-D-galactosyl-(1-&gt;4)-beta-D-glucosyl-(1&lt;-&gt;1)-ceramide(d18:1(4E)) to produce globotriaosylceramide/globoside Gb3Cer (d18:1(4E)). Also able to transfer galactose to galactosylceramide/beta-D-Gal-(1&lt;-&gt;1')-Cer. Globoside Gb3Cer is a glycosphingolipid of the globo serie, one of the major types of neutral root structures of glycosphingolipids, that constitute a significant portion of mammalian cell membranes. Globotriaosylceramide/globoside Gb3Cer in blood and tissue cell membranes is the antigen Pk of blood histogroup P. In terms of biological role, (Microbial infection) Globotriaosylceramide is one of the cellular ligands for bacterial verotoxins. This is Lactosylceramide 4-alpha-galactosyltransferase (A4GALT) from Homo sapiens (Human).